A 136-amino-acid polypeptide reads, in one-letter code: MGVYHGNDLKKPTGGKKRPHQKVKRKYWMGRYPTFTRLDNRDVRVHIRVRGGNYKIRLKRAAYANVIDPETNTARKVRILRVVETPANPHYARANIIVKGTIIETELGKAVVTSRPGQDGVINAVLIEKRSERPAG.

Positions 1–23 are disordered; sequence MGVYHGNDLKKPTGGKKRPHQKV. The segment covering 13–23 has biased composition (basic residues); that stretch reads TGGKKRPHQKV.

It belongs to the eukaryotic ribosomal protein eS8 family. In terms of assembly, part of the 30S ribosomal subunit.

In Hyperthermus butylicus (strain DSM 5456 / JCM 9403 / PLM1-5), this protein is Small ribosomal subunit protein eS8.